Here is a 199-residue protein sequence, read N- to C-terminus: 3-isopropylmalate dehydratase small subunit (199 aa).

Belongs to the LeuD family. LeuD type 1 subfamily. As to quaternary structure, heterodimer of LeuC and LeuD.

The catalysed reaction is (2R,3S)-3-isopropylmalate = (2S)-2-isopropylmalate. Its pathway is amino-acid biosynthesis; L-leucine biosynthesis; L-leucine from 3-methyl-2-oxobutanoate: step 2/4. Its function is as follows. Catalyzes the isomerization between 2-isopropylmalate and 3-isopropylmalate, via the formation of 2-isopropylmaleate. The sequence is that of 3-isopropylmalate dehydratase small subunit from Bacillus velezensis (strain DSM 23117 / BGSC 10A6 / LMG 26770 / FZB42) (Bacillus amyloliquefaciens subsp. plantarum).